A 525-amino-acid polypeptide reads, in one-letter code: Protein translocase subunit SecD (525 aa).

The next 6 membrane-spanning stretches (helical) occupy residues 9–29 (LYLVVLVALGSIYYALPSLLG), 368–388 (VLIGGVLVVLFMVLYYKGFGM), 392–412 (LAVVLNVTILVSLLALMQATL), 415–435 (PGIAGAVLLLGMAVDANVLIF), 460–480 (FSTILDANITTLITAVILYQF), and 487–507 (GFAVTLSVGLLASMFTAIFVT).

The protein belongs to the SecD/SecF family. SecD subfamily. In terms of assembly, forms a complex with SecF. Part of the essential Sec protein translocation apparatus which comprises SecA, SecYEG and auxiliary proteins SecDF-YajC and YidC.

It is found in the cell inner membrane. Its function is as follows. Part of the Sec protein translocase complex. Interacts with the SecYEG preprotein conducting channel. SecDF uses the proton motive force (PMF) to complete protein translocation after the ATP-dependent function of SecA. In Magnetococcus marinus (strain ATCC BAA-1437 / JCM 17883 / MC-1), this protein is Protein translocase subunit SecD.